The following is a 1049-amino-acid chain: Protein argonaute 12 (1049 aa).

Residues 1 to 53 (MSSRGGGGGGRRGGRGGGGGREGGGGGGGGGGRGGQGRGDLGVVGERQGGGRG) are compositionally biased toward gly residues. Disordered stretches follow at residues 1–101 (MSSR…GVQV) and 144–192 (GGAP…KAVT). Over residues 54–65 (AGERGGRHDAPR) the composition is skewed to basic and acidic residues. A compositionally biased stretch (gly residues) spans 66–76 (GRGGVAVGAGA). A compositionally biased stretch (low complexity) spans 144 to 160 (GGAPPAGQGSSLAAAQG). One can recognise a PAZ domain in the interval 404–515 (PVMDFAVQYL…LPMEVCSILE (112 aa)). Residues 694–1012 (LLIVILTEIS…GAFRARYYME (319 aa)) enclose the Piwi domain.

It belongs to the argonaute family. Ago subfamily.

In terms of biological role, probably involved in the RNA silencing pathway. May bind to short RNAs such as microRNAs (miRNAs) or short interfering RNAs (siRNAs), and represses the translation of mRNAs which are complementary to them. The sequence is that of Protein argonaute 12 (AGO12) from Oryza sativa subsp. japonica (Rice).